The chain runs to 503 residues: Cytochrome P450 7A1 (503 aa).

The chain crosses the membrane as a helical span at residues 4-24; the sequence is ISLIWGIAVVVSCCIWFIIGI. Cys444 contacts heme.

Belongs to the cytochrome P450 family. Requires heme as cofactor.

Its subcellular location is the endoplasmic reticulum membrane. The protein resides in the microsome membrane. The enzyme catalyses cholesterol + reduced [NADPH--hemoprotein reductase] + O2 = 7alpha-hydroxycholesterol + oxidized [NADPH--hemoprotein reductase] + H2O + H(+). It catalyses the reaction 4beta-hydroxycholesterol + reduced [NADPH--hemoprotein reductase] + O2 = 4beta,7alpha-dihydroxycholesterol + oxidized [NADPH--hemoprotein reductase] + H2O + H(+). The catalysed reaction is lathosterol + reduced [NADPH--hemoprotein reductase] + O2 = 7alpha,8alpha-epoxy-5alpha-cholestan-3beta-ol + oxidized [NADPH--hemoprotein reductase] + H2O + H(+). It carries out the reaction lathosterol + reduced [NADPH--hemoprotein reductase] + O2 = 5alpha-cholestan-7-oxo-3beta-ol + oxidized [NADPH--hemoprotein reductase] + H2O + H(+). The enzyme catalyses 7-dehydrocholesterol + reduced [NADPH--hemoprotein reductase] + O2 = 7-oxocholesterol + oxidized [NADPH--hemoprotein reductase] + H2O + H(+). It catalyses the reaction (24S)-hydroxycholesterol + reduced [NADPH--hemoprotein reductase] + O2 = (24S)-7alpha-dihydroxycholesterol + oxidized [NADPH--hemoprotein reductase] + H2O + H(+). The catalysed reaction is (24R)-hydroxycholesterol + reduced [NADPH--hemoprotein reductase] + O2 = (24R)-7alpha-dihydroxycholesterol + oxidized [NADPH--hemoprotein reductase] + H2O + H(+). Its pathway is lipid metabolism; bile acid biosynthesis. The protein operates within steroid metabolism; cholesterol degradation. Functionally, a cytochrome P450 monooxygenase involved in the metabolism of endogenous cholesterol and its oxygenated derivatives (oxysterols). Mechanistically, uses molecular oxygen inserting one oxygen atom into a substrate, and reducing the second into a water molecule, with two electrons provided by NADPH via cytochrome P450 reductase (CPR; NADPH-ferrihemoprotein reductase). Functions as a critical regulatory enzyme of bile acid biosynthesis and cholesterol homeostasis. Catalyzes the hydroxylation of carbon hydrogen bond at 7-alpha position of cholesterol, a rate-limiting step in cholesterol catabolism and bile acid biosynthesis. 7-alpha hydroxylates several oxysterols, including 4beta-hydroxycholesterol and 24-hydroxycholesterol. Catalyzes the oxidation of the 7,8 double bond of 7-dehydrocholesterol and lathosterol with direct and predominant formation of the 7-keto derivatives. This is Cytochrome P450 7A1 from Mus musculus (Mouse).